The chain runs to 612 residues: Actin-binding LIM protein 2 (612 aa).

4 consecutive LIM zinc-binding domains span residues 22–81 (ILCN…LYGT), 81–141 (TRCF…TLVG), 151–210 (RSCG…KFGI), and 210–270 (IRCD…ARTE). Zn(2+)-binding residues include cysteine 83, cysteine 86, histidine 103, cysteine 106, cysteine 109, cysteine 112, cysteine 131, and cysteine 134. Zn(2+) contacts are provided by cysteine 212, cysteine 215, histidine 232, cysteine 235, cysteine 238, cysteine 241, histidine 260, and cysteine 263. Residues 269–278 (TEDKSKETRT) show a composition bias toward basic and acidic residues. 2 disordered regions span residues 269-295 (TEDKSKETRTSSESIVSVPASSTSGSP) and 341-433 (AVGD…DNIY). Low complexity-rich tracts occupy residues 279–295 (SSESIVSVPASSTSGSP) and 364–373 (SSPSSAGSVS). Serine 282, serine 294, serine 365, and serine 368 each carry phosphoserine. Over residues 394 to 416 (SGRSTPSLSVHSDSRPPSSTYQQ) the composition is skewed to polar residues. Serine 453 carries the post-translational modification Phosphoserine. The tract at residues 471-520 (ADTRTNSPDLDSQSLSLSSGADQEPLQRMPGDSLYSRFPYSKPDTLPGPR) is disordered. Threonine 473 is modified (phosphothreonine). Phosphoserine occurs at positions 477 and 579. The span at 477–489 (SPDLDSQSLSLSS) shows a compositional bias: low complexity. Positions 544–612 (TREYKIYPYD…NDLKKKALLF (69 aa)) constitute an HP domain.

In terms of assembly, interacts with F-actin and ABRA.

The protein resides in the cytoplasm. Functionally, may act as scaffold protein. May stimulate ABRA activity and ABRA-dependent SRF transcriptional activity. The chain is Actin-binding LIM protein 2 (Ablim2) from Rattus norvegicus (Rat).